We begin with the raw amino-acid sequence, 417 residues long: Inactive cytochrome P450 76AD1 (417 aa).

Residues Ala-4–Phe-24 form a helical membrane-spanning segment.

The protein belongs to the cytochrome P450 family.

The protein localises to the membrane. Its pathway is pigment biosynthesis; betalain biosynthesis. Functionally, inactive cytochrome unable to convert L-DOPA to cyclo-DOPA in the betalain pathway and producing a yellow mutant phenotype. A frameshift replaces 108 amino acids of the active protein found in red beets (AC I3PFJ5) with 27 new residues followed by a stop codon. This Beta vulgaris (Sugar beet) protein is Inactive cytochrome P450 76AD1.